A 477-amino-acid chain; its full sequence is Cytochrome b mRNA maturase bI3 (477 aa).

The segment at 1–163 (MRLLKSHPLL…IPWIGQDIVE (163 aa)) is cytochrome b. Helical transmembrane passes span 32–52 (FGSL…TLAM), 86–106 (ASAF…YGSY), 113–133 (VWAI…LGYV), 142–162 (WGAT…QDIV), and 166–186 (IITL…VVVY). A maturase region spans residues 164-477 (SKIITLIINL…YSTLNYPDAK (314 aa)).

It in the N-terminal section; belongs to the cytochrome b family. In the C-terminal section; belongs to the LAGLIDADG endonuclease family.

It localises to the mitochondrion inner membrane. Its function is as follows. Mitochondrial mRNA maturase required for splicing of intron 3 of the cytochrome b (cob) gene, containing its own coding sequence. The protein is Cytochrome b mRNA maturase bI3 (bI3) of Neurospora crassa (strain ATCC 24698 / 74-OR23-1A / CBS 708.71 / DSM 1257 / FGSC 987).